The primary structure comprises 1024 residues: Unconventional myosin-Ig (1024 aa).

One can recognise a Myosin motor domain in the interval 15-713; that stretch reads YGKPDFVLLD…TLVTLEQSRA (699 aa). 108 to 115 contacts ATP; sequence GESGAGKT. Residues 590 to 612 are actin-binding; it reads MVALVENLASKEPFYVRCIKPNE. The IQ domain occupies 716–745; sequence IPIIVLLLQKAWRGTLARWHCRRLRAIYTI. A TH1 domain is found at 830 to 1023; sequence GLRQDWGCQR…RSTFTLLWPS (194 aa). Positions 999 to 1024 are disordered; sequence VEPRPEQPEPDFQSSRSTFTLLWPSH.

It belongs to the TRAFAC class myosin-kinesin ATPase superfamily. Myosin family. Interacts with calmodulin; via its IQ motifs. Specifically expressed in hematopoietic cells. Detected in adult tissues of the immune system such as thymus, lymph nodes and spleen, but not in brain, lung, heart, liver, small intestine, testis and kidney (at protein level). Highly expressed in T-lymphocytes; constitutes the most highly expressed class I myosin in naive CD4 and CD8 T-cells. Also present in B-lymphocytes.

Its subcellular location is the cell membrane. It is found in the cell projection. The protein localises to the phagocytic cup. Its function is as follows. Unconventional myosin required during immune response for detection of rare antigen-presenting cells by regulating T-cell migration. Unconventional myosins are actin-based motor molecules with ATPase activity and serve in intracellular movements. Acts as a regulator of T-cell migration by generating membrane tension, enforcing cell-intrinsic meandering search, thereby enhancing detection of rare antigens during lymph-node surveillance, enabling pathogen eradication. Also required in B-cells, where it regulates different membrane/cytoskeleton-dependent processes. Involved in Fc-gamma receptor (Fc-gamma-R) phagocytosis. The sequence is that of Unconventional myosin-Ig (Myo1g) from Mus musculus (Mouse).